The primary structure comprises 458 residues: Divalent metal cation transporter MntH (458 aa).

Transmembrane regions (helical) follow at residues Gly38–Met58, Ser76–Ala96, Gly119–Ile139, Met151–Met171, Ala180–Ala200, Met223–Gly243, Leu275–Gly295, Ile315–Ser335, Leu370–Ile390, Leu393–Val413, and Phe437–Val457.

It belongs to the NRAMP family.

The protein resides in the cell membrane. In terms of biological role, h(+)-stimulated, divalent metal cation uptake system. The sequence is that of Divalent metal cation transporter MntH from Lacticaseibacillus casei (strain BL23) (Lactobacillus casei).